A 306-amino-acid polypeptide reads, in one-letter code: Oligopeptide transport system permease protein OppB (306 aa).

Topologically, residues 1–8 (MLKFIFKR) are cytoplasmic. A helical transmembrane segment spans residues 9 to 29 (LLEALPTLFILITFSFFLMRL). Topologically, residues 30-99 (APGSPFTSER…IASAFPVSIK (70 aa)) are periplasmic. The ABC transmembrane type-1 domain maps to 94–293 (FPVSIKLGMV…TLTILFNAIV (200 aa)). The chain crosses the membrane as a helical span at residues 100 to 120 (LGMVAFAFAVVLGVTAGTLAA). The Cytoplasmic portion of the chain corresponds to 121-135 (LNQNSRWDYILMSFS). A helical transmembrane segment spans residues 136-156 (MLGVIMPSFVFAPVLVLIFAI). The Periplasmic portion of the chain corresponds to 157 to 169 (YLGWLPAGGWNGG). A helical transmembrane segment spans residues 170-190 (TAMYMILPVASLTIAYVAGIA). Topologically, residues 191-229 (RIMRGSMIEVLHSNFIRTAKAKGLSMSRIILKHALRPAL) are cytoplasmic. A helical transmembrane segment spans residues 230–250 (LPVITYLGPAFVGIITGSMVI). At 251-279 (ESVFGLPGMGLLFVNGALNRDYSLVLSLT) the chain is on the periplasmic side. Residues 280 to 300 (ILVGTLTILFNAIVDILYAII) form a helical membrane-spanning segment. Residues 301 to 306 (DPKIRY) are Cytoplasmic-facing.

This sequence belongs to the binding-protein-dependent transport system permease family. OppBC subfamily. In terms of assembly, the complex is composed of two ATP-binding proteins (OppD and OppF), two transmembrane proteins (OppB and OppC) and a solute-binding protein (OppA).

Its subcellular location is the cell inner membrane. Functionally, part of the ABC transporter complex OppABCDF involved in the uptake of oligopeptides. Probably responsible for the translocation of the substrate across the membrane. The sequence is that of Oligopeptide transport system permease protein OppB (oppB) from Haemophilus influenzae (strain ATCC 51907 / DSM 11121 / KW20 / Rd).